The chain runs to 193 residues: ATP-dependent Clp protease proteolytic subunit 2 (193 aa).

The active-site Nucleophile is the serine 98. Histidine 123 is an active-site residue.

It belongs to the peptidase S14 family. As to quaternary structure, fourteen ClpP subunits assemble into 2 heptameric rings which stack back to back to give a disk-like structure with a central cavity, resembling the structure of eukaryotic proteasomes.

The protein resides in the cytoplasm. The catalysed reaction is Hydrolysis of proteins to small peptides in the presence of ATP and magnesium. alpha-casein is the usual test substrate. In the absence of ATP, only oligopeptides shorter than five residues are hydrolyzed (such as succinyl-Leu-Tyr-|-NHMec, and Leu-Tyr-Leu-|-Tyr-Trp, in which cleavage of the -Tyr-|-Leu- and -Tyr-|-Trp bonds also occurs).. Its function is as follows. Cleaves peptides in various proteins in a process that requires ATP hydrolysis. Has a chymotrypsin-like activity. Plays a major role in the degradation of misfolded proteins. The polypeptide is ATP-dependent Clp protease proteolytic subunit 2 (Bacillus cereus (strain ATCC 10987 / NRS 248)).